The following is a 438-amino-acid chain: MAKPVVAIVGRPNVGKSTLFNRLAGYRISIVEGEPNVTRDRIYADVNWLDRSFIIVDTGGIDPYDRDQIKNMVKYQAQMAIDEASLILFVVDGRNGLTATDEEVAAFLRKSNKKVILVVNKVDDFKNMEEDCWEFYTLGFDKLIPISAEHGKNTGDLLDEIVNMLPEKGPEDSDDDAIDVAIIGKPNVGKSSLVNYIVGQERVIVSDIPGTTRDAIDTLVEKNGHRYNLIDTAGLRKKSRVKEATEYYSALRTIKAIDRSDGVIMMIDALEGVTEQDKKIAGYAHEAGKAIVLAVNKWDLVEKDTHTMENYKEEIYYNLKFLQYAPVTFISALTGKRVQELLKLIEYVVDQNSRRVKTGLLNEVVQESIQLREPPTRKGKKLKIFYTTQVGIKPPTFVFFVNNPGLVHFAYQRYLENSLRDAFGFVGSPIRLKFKQKT.

EngA-type G domains are found at residues 4–169 (PVVA…PEKG) and 178–353 (IDVA…DQNS). GTP is bound by residues 10 to 17 (GRPNVGKS), 57 to 61 (DTGGI), 120 to 123 (NKVD), 184 to 191 (GKPNVGKS), 231 to 235 (DTAGL), and 296 to 299 (NKWD). In terms of domain architecture, KH-like spans 354–438 (RRVKTGLLNE…PIRLKFKQKT (85 aa)).

This sequence belongs to the TRAFAC class TrmE-Era-EngA-EngB-Septin-like GTPase superfamily. EngA (Der) GTPase family. As to quaternary structure, associates with the 50S ribosomal subunit.

In terms of biological role, GTPase that plays an essential role in the late steps of ribosome biogenesis. The polypeptide is GTPase Der (Halothermothrix orenii (strain H 168 / OCM 544 / DSM 9562)).